Reading from the N-terminus, the 610-residue chain is F-box/LRR-repeat protein 4 (610 aa).

Positions 5 to 52 (DRINNCLPEELILEIFRRLESKPNRDACSLVCKRWLSLERFSRTTLRI) constitute an F-box domain. 19 LRR repeats span residues 53-79 (GASF…HVDE), 124-149 (SSSL…SLIW), 150-175 (CPNV…DLQG), 178-200 (VGDQ…NLRF), 201-227 (CEGL…GVAA), 228-253 (SAKI…YLDS), 256-277 (IHDK…LKLQ), 278-303 (CVSV…ALYS), 304-329 (FQHF…TLSD), 330-355 (CYFV…EING), 356-381 (CHNI…ALLY), 382-407 (CQRI…HLVD), 408-433 (CSGI…HIRR), 434-459 (CYEI…SLRF), 460-484 (CDKV…NVSG), 485-510 (CNQI…DISV), 511-536 (LQNI…VLSH), 537-562 (CHHI…HMVY), and 563-588 (CPGI…LIEK). The segment at 88 to 125 (LSPSPKRKRGRDSSSPSSSKRKKLTDKTHSGAENVESS) is disordered.

The polypeptide is F-box/LRR-repeat protein 4 (FBL4) (Arabidopsis thaliana (Mouse-ear cress)).